The sequence spans 252 residues: Zinc import ATP-binding protein ZnuC (252 aa).

The ABC transporter domain maps to 5 to 220 (VTLNKISVTF…PEFIAMFGQR (216 aa)). Residue 37-44 (GPNGAGKS) coordinates ATP.

Belongs to the ABC transporter superfamily. Zinc importer (TC 3.A.1.15.5) family. In terms of assembly, the complex is composed of two ATP-binding proteins (ZnuC), two transmembrane proteins (ZnuB) and a solute-binding protein (ZnuA).

It is found in the cell inner membrane. The enzyme catalyses Zn(2+)(out) + ATP(in) + H2O(in) = Zn(2+)(in) + ADP(in) + phosphate(in) + H(+)(in). Part of the ABC transporter complex ZnuABC involved in zinc import. Responsible for energy coupling to the transport system. This is Zinc import ATP-binding protein ZnuC from Yersinia enterocolitica serotype O:8 / biotype 1B (strain NCTC 13174 / 8081).